Here is a 205-residue protein sequence, read N- to C-terminus: Transcription antitermination protein NusB (205 aa).

This sequence belongs to the NusB family.

Involved in transcription antitermination. Required for transcription of ribosomal RNA (rRNA) genes. Binds specifically to the boxA antiterminator sequence of the ribosomal RNA (rrn) operons. This Acaryochloris marina (strain MBIC 11017) protein is Transcription antitermination protein NusB.